Consider the following 658-residue polypeptide: Putative arrestin-related trafficking adapter C2D10.04 (658 aa).

Disordered stretches follow at residues 21–107 and 638–658; these read LHHQ…LTWS and REEA…EIPR. Over residues 39–81 the composition is skewed to low complexity; that stretch reads NRSSNSGLNRRNSVFGLPSSGLSSRLSKPSLSSINNSNNSSSN. The span at 96–107 shows a compositional bias: polar residues; it reads RNMSNKPPLTWS. Serine 653 carries the phosphoserine modification.

The protein belongs to the ALY1 family.

The protein resides in the cytoplasm. In terms of biological role, may regulate endocytosis in response to extracellular stimuli. This is Putative arrestin-related trafficking adapter C2D10.04 from Schizosaccharomyces pombe (strain 972 / ATCC 24843) (Fission yeast).